The sequence spans 122 residues: Small ribosomal subunit protein uS12 (122 aa).

The interval 1 to 24 (MPTINQLIRKKRKSTGKKRTAPAL) is disordered. The segment covering 8–20 (IRKKRKSTGKKRT) has biased composition (basic residues). Aspartate 89 is subject to 3-methylthioaspartic acid.

This sequence belongs to the universal ribosomal protein uS12 family. In terms of assembly, part of the 30S ribosomal subunit. Contacts proteins S8 and S17. May interact with IF1 in the 30S initiation complex.

Its function is as follows. With S4 and S5 plays an important role in translational accuracy. Functionally, interacts with and stabilizes bases of the 16S rRNA that are involved in tRNA selection in the A site and with the mRNA backbone. Located at the interface of the 30S and 50S subunits, it traverses the body of the 30S subunit contacting proteins on the other side and probably holding the rRNA structure together. The combined cluster of proteins S8, S12 and S17 appears to hold together the shoulder and platform of the 30S subunit. This chain is Small ribosomal subunit protein uS12, found in Natranaerobius thermophilus (strain ATCC BAA-1301 / DSM 18059 / JW/NM-WN-LF).